Reading from the N-terminus, the 102-residue chain is Small ribosomal subunit protein uS10 (102 aa).

It belongs to the universal ribosomal protein uS10 family. In terms of assembly, part of the 30S ribosomal subunit.

In terms of biological role, involved in the binding of tRNA to the ribosomes. In Citrifermentans bemidjiense (strain ATCC BAA-1014 / DSM 16622 / JCM 12645 / Bem) (Geobacter bemidjiensis), this protein is Small ribosomal subunit protein uS10.